The following is a 368-amino-acid chain: MTRLYDFAPSNIRAIAPYQPGKPITELAREMGLKPGVIIKLASNENPLGVSPKAYAAMQDALEDIARYPDGNSFALRDCVCRKFKLQPDQLVFGNGSNDILELAARAFLTPGTEAVYAQHAFAVYALVTQATGASGISVPARDFGHDLDAMLAAITDKTRLFIANPNNPTGTLLSKPALRDFLAKVPRQVLVVLDEAYDEYLAAELKSEAFSWLAEFDNLLISRTLSKAYGLAGLRVGFGVTSPGVADLMNRVRQPFNVNSVAQAAAVAALEDDEFVERSYALNQAGMQQLTEGLARLGLSYIPSYGNFVSFHVAQAAEVYQQLLKRGVIVRPVAAYDMPDYLRVSIGLHAENARFLEVLEQILKTRT.

At lysine 228 the chain carries N6-(pyridoxal phosphate)lysine.

It belongs to the class-II pyridoxal-phosphate-dependent aminotransferase family. Histidinol-phosphate aminotransferase subfamily. Homodimer. Pyridoxal 5'-phosphate serves as cofactor.

It carries out the reaction L-histidinol phosphate + 2-oxoglutarate = 3-(imidazol-4-yl)-2-oxopropyl phosphate + L-glutamate. Its pathway is amino-acid biosynthesis; L-histidine biosynthesis; L-histidine from 5-phospho-alpha-D-ribose 1-diphosphate: step 7/9. This Methylobacillus flagellatus protein is Histidinol-phosphate aminotransferase (hisC).